Consider the following 220-residue polypeptide: Flagellin A2 (220 aa).

A propeptide spanning residues Met-1–Gly-11 is cleaved from the precursor. 4 N-linked (GlcNAc...) asparagine glycosylation sites follow: Asn-78, Asn-95, Asn-112, and Asn-124.

Belongs to the archaeal flagellin family. In terms of processing, glycosylated by a pentasaccharide similar to the S-layer glycoprotein, probably comprising a hexose, 2 hexuronic acids, a methyl ester of a hexuronic acid and mannose.

It localises to the archaeal flagellum. Flagellin that plays both structural and regulatory roles in flagella biosynthesis. Does not constitute a major flagellin in terms of abundance contrary to FlgA1: may regulate the flagella-dependent swimming motility depending on the relative abundance of FlgA1. Not involved in PibD-dependent surface adhesion. The chain is Flagellin A2 (flgA2) from Haloferax volcanii (strain ATCC 29605 / DSM 3757 / JCM 8879 / NBRC 14742 / NCIMB 2012 / VKM B-1768 / DS2) (Halobacterium volcanii).